The sequence spans 89 residues: Large ribosomal subunit protein bL27 (89 aa).

The disordered stretch occupies residues 1–24 (MAHKKAGGSSRNGRDSDGRRLGVK).

This sequence belongs to the bacterial ribosomal protein bL27 family.

This Azorhizobium caulinodans (strain ATCC 43989 / DSM 5975 / JCM 20966 / LMG 6465 / NBRC 14845 / NCIMB 13405 / ORS 571) protein is Large ribosomal subunit protein bL27.